Reading from the N-terminus, the 426-residue chain is Enolase (426 aa).

Glutamine 162 lines the (2R)-2-phosphoglycerate pocket. The active-site Proton donor is glutamate 204. Residues aspartate 241, glutamate 284, and aspartate 311 each coordinate Mg(2+). Lysine 336, arginine 365, serine 366, and lysine 387 together coordinate (2R)-2-phosphoglycerate. Lysine 336 (proton acceptor) is an active-site residue.

It belongs to the enolase family. Mg(2+) serves as cofactor.

It localises to the cytoplasm. It is found in the secreted. The protein localises to the cell surface. The enzyme catalyses (2R)-2-phosphoglycerate = phosphoenolpyruvate + H2O. Its pathway is carbohydrate degradation; glycolysis; pyruvate from D-glyceraldehyde 3-phosphate: step 4/5. Its function is as follows. Catalyzes the reversible conversion of 2-phosphoglycerate (2-PG) into phosphoenolpyruvate (PEP). It is essential for the degradation of carbohydrates via glycolysis. The protein is Enolase of Acidithiobacillus ferrooxidans (strain ATCC 23270 / DSM 14882 / CIP 104768 / NCIMB 8455) (Ferrobacillus ferrooxidans (strain ATCC 23270)).